A 946-amino-acid chain; its full sequence is Protein translocase subunit SecA (946 aa).

Residues glutamine 87, glycine 105–threonine 109, and aspartate 524 contribute to the ATP site. A disordered region spans residues alanine 905–arginine 926. 4 residues coordinate Zn(2+): cysteine 930, cysteine 932, cysteine 941, and histidine 942.

Belongs to the SecA family. As to quaternary structure, monomer and homodimer. Part of the essential Sec protein translocation apparatus which comprises SecA, SecYEG and auxiliary proteins SecDF-YajC and YidC. Zn(2+) is required as a cofactor.

The protein localises to the cell inner membrane. The protein resides in the cytoplasm. It carries out the reaction ATP + H2O + cellular proteinSide 1 = ADP + phosphate + cellular proteinSide 2.. In terms of biological role, part of the Sec protein translocase complex. Interacts with the SecYEG preprotein conducting channel. Has a central role in coupling the hydrolysis of ATP to the transfer of proteins into and across the cell membrane, serving both as a receptor for the preprotein-SecB complex and as an ATP-driven molecular motor driving the stepwise translocation of polypeptide chains across the membrane. This is Protein translocase subunit SecA from Bradyrhizobium diazoefficiens (strain JCM 10833 / BCRC 13528 / IAM 13628 / NBRC 14792 / USDA 110).